The primary structure comprises 164 residues: Putative protein ZNF321 (164 aa).

The sequence is that of Putative protein ZNF321 (ZNF321P) from Homo sapiens (Human).